The sequence spans 137 residues: Ribosome-binding factor A (137 aa).

Belongs to the RbfA family. In terms of assembly, monomer. Binds 30S ribosomal subunits, but not 50S ribosomal subunits or 70S ribosomes.

The protein localises to the cytoplasm. Its function is as follows. One of several proteins that assist in the late maturation steps of the functional core of the 30S ribosomal subunit. Associates with free 30S ribosomal subunits (but not with 30S subunits that are part of 70S ribosomes or polysomes). Required for efficient processing of 16S rRNA. May interact with the 5'-terminal helix region of 16S rRNA. The protein is Ribosome-binding factor A of Allorhizobium ampelinum (strain ATCC BAA-846 / DSM 112012 / S4) (Agrobacterium vitis (strain S4)).